The primary structure comprises 443 residues: ATP-dependent protease ATPase subunit HslU (443 aa).

ATP is bound by residues I19, 61–66, D256, E321, and R393; that span reads GVGKTE.

It belongs to the ClpX chaperone family. HslU subfamily. In terms of assembly, a double ring-shaped homohexamer of HslV is capped on each side by a ring-shaped HslU homohexamer. The assembly of the HslU/HslV complex is dependent on binding of ATP.

The protein localises to the cytoplasm. Its function is as follows. ATPase subunit of a proteasome-like degradation complex; this subunit has chaperone activity. The binding of ATP and its subsequent hydrolysis by HslU are essential for unfolding of protein substrates subsequently hydrolyzed by HslV. HslU recognizes the N-terminal part of its protein substrates and unfolds these before they are guided to HslV for hydrolysis. The chain is ATP-dependent protease ATPase subunit HslU from Cupriavidus pinatubonensis (strain JMP 134 / LMG 1197) (Cupriavidus necator (strain JMP 134)).